A 273-amino-acid chain; its full sequence is Putative pyruvate, phosphate dikinase regulatory protein (273 aa).

149–156 (GPSRTSKT) contacts ADP.

This sequence belongs to the pyruvate, phosphate/water dikinase regulatory protein family. PDRP subfamily.

The catalysed reaction is N(tele)-phospho-L-histidyl/L-threonyl-[pyruvate, phosphate dikinase] + ADP = N(tele)-phospho-L-histidyl/O-phospho-L-threonyl-[pyruvate, phosphate dikinase] + AMP + H(+). It catalyses the reaction N(tele)-phospho-L-histidyl/O-phospho-L-threonyl-[pyruvate, phosphate dikinase] + phosphate + H(+) = N(tele)-phospho-L-histidyl/L-threonyl-[pyruvate, phosphate dikinase] + diphosphate. Its function is as follows. Bifunctional serine/threonine kinase and phosphorylase involved in the regulation of the pyruvate, phosphate dikinase (PPDK) by catalyzing its phosphorylation/dephosphorylation. The chain is Putative pyruvate, phosphate dikinase regulatory protein from Rickettsia felis (strain ATCC VR-1525 / URRWXCal2) (Rickettsia azadi).